Here is a 373-residue protein sequence, read N- to C-terminus: Chaperone protein DnaJ (373 aa).

In terms of domain architecture, J spans 5–70 (DYYEVLGLQK…EKKSNYDQFG (66 aa)). The segment at 132-214 (GVEKEITVNR…CRGNGNVRKT (83 aa)) adopts a CR-type zinc-finger fold. Zn(2+) is bound by residues cysteine 145, cysteine 148, cysteine 162, cysteine 165, cysteine 188, cysteine 191, cysteine 202, and cysteine 205. 4 CXXCXGXG motif repeats span residues 145–152 (CEHCNGSG), 162–169 (CPTCSGTG), 188–195 (CDRCSGTG), and 202–209 (CTHCRGNG).

This sequence belongs to the DnaJ family. In terms of assembly, homodimer. Zn(2+) is required as a cofactor.

The protein resides in the cytoplasm. Participates actively in the response to hyperosmotic and heat shock by preventing the aggregation of stress-denatured proteins and by disaggregating proteins, also in an autonomous, DnaK-independent fashion. Unfolded proteins bind initially to DnaJ; upon interaction with the DnaJ-bound protein, DnaK hydrolyzes its bound ATP, resulting in the formation of a stable complex. GrpE releases ADP from DnaK; ATP binding to DnaK triggers the release of the substrate protein, thus completing the reaction cycle. Several rounds of ATP-dependent interactions between DnaJ, DnaK and GrpE are required for fully efficient folding. Also involved, together with DnaK and GrpE, in the DNA replication of plasmids through activation of initiation proteins. The sequence is that of Chaperone protein DnaJ from Clostridium botulinum (strain Eklund 17B / Type B).